The sequence spans 312 residues: Malate dehydrogenase (312 aa).

NAD(+) is bound by residues 7–13 (GAAGGIG) and aspartate 34. Arginine 81 and arginine 87 together coordinate substrate. NAD(+)-binding positions include asparagine 94 and 117-119 (ITN). Substrate contacts are provided by asparagine 119 and arginine 153. Residue histidine 177 is the Proton acceptor of the active site. Position 228 (methionine 228) interacts with NAD(+).

This sequence belongs to the LDH/MDH superfamily. MDH type 1 family. As to quaternary structure, homodimer.

The enzyme catalyses (S)-malate + NAD(+) = oxaloacetate + NADH + H(+). Catalyzes the reversible oxidation of malate to oxaloacetate. The chain is Malate dehydrogenase from Mannheimia succiniciproducens (strain KCTC 0769BP / MBEL55E).